The following is a 385-amino-acid chain: Putative nickel insertion protein (385 aa).

This sequence belongs to the LarC family.

This Geobacter sp. (strain M21) protein is Putative nickel insertion protein.